A 166-amino-acid polypeptide reads, in one-letter code: Ribosome maturation factor RimM (166 aa).

The PRC barrel domain maps to 94-165; the sequence is EGEYYLGKLI…TIELKVLDLL (72 aa).

It belongs to the RimM family. In terms of assembly, binds ribosomal protein uS19.

The protein localises to the cytoplasm. Its function is as follows. An accessory protein needed during the final step in the assembly of 30S ribosomal subunit, possibly for assembly of the head region. Essential for efficient processing of 16S rRNA. May be needed both before and after RbfA during the maturation of 16S rRNA. It has affinity for free ribosomal 30S subunits but not for 70S ribosomes. The protein is Ribosome maturation factor RimM of Borreliella afzelii (strain PKo) (Borrelia afzelii).